A 357-amino-acid polypeptide reads, in one-letter code: MWYNNQLTQSLNIQYPIIQAGMAGSTTAELVATVSNKGGLGCIGAGYFTTKKLEQEIQKVQGLTSQPFGVNLFVPSHQSYTNEQVEHMNAWLKPYRKALNLEEPVVNISEEQQFKSAIQTVIKYRVPVCCFTFGIPSKEIIEQLKGAKITLIGTATTVDEAIANEHAGMDIVVAQGSEAGGHRGSFLTTNNQREPLIGTMSLIPQIVDHVSIPVVAAGGVMDGRGILASQILGAQGVQMGTAFLTTEESGANQLVKQAVLHSKETDTIVTDVFSGKSARGINNEFVETMKQYEGNIPPYPVQNQLTNSIRKTAASTGHREWTHMWSGQSPRLATSQHVNQLMDRLVEQVKTLLTVVR.

Residues Asn-71, Gln-175, Gly-180, Gly-219, and 238-241 (QMGT) each bind FMN.

The protein belongs to the nitronate monooxygenase family. NMO class I subfamily. The cofactor is FMN.

The catalysed reaction is 3 propionate 3-nitronate + 3 O2 + H2O = 3 3-oxopropanoate + 2 nitrate + nitrite + H2O2 + 3 H(+). Functionally, nitronate monooxygenase that uses molecular oxygen to catalyze the oxidative denitrification of alkyl nitronates. Acts on propionate 3-nitronate (P3N), the presumed physiological substrate. Probably functions in the detoxification of P3N, a metabolic poison produced by plants and fungi as a defense mechanism. This is Probable nitronate monooxygenase from Staphylococcus haemolyticus (strain JCSC1435).